A 144-amino-acid polypeptide reads, in one-letter code: Large ribosomal subunit protein uL11 (144 aa).

This sequence belongs to the universal ribosomal protein uL11 family. Part of the ribosomal stalk of the 50S ribosomal subunit. Interacts with L10 and the large rRNA to form the base of the stalk. L10 forms an elongated spine to which L12 dimers bind in a sequential fashion forming a multimeric L10(L12)X complex. One or more lysine residues are methylated.

Functionally, forms part of the ribosomal stalk which helps the ribosome interact with GTP-bound translation factors. The chain is Large ribosomal subunit protein uL11 from Legionella pneumophila (strain Paris).